The following is a 396-amino-acid chain: 1-deoxy-D-xylulose 5-phosphate reductoisomerase (396 aa).

NADPH contacts are provided by Thr-13, Gly-14, Ser-15, Val-16, and Asn-127. Lys-128 contributes to the 1-deoxy-D-xylulose 5-phosphate binding site. Glu-129 serves as a coordination point for NADPH. Asp-153 lines the Mn(2+) pocket. 4 residues coordinate 1-deoxy-D-xylulose 5-phosphate: Ser-154, Glu-155, Ser-184, and His-207. Mn(2+) is bound at residue Glu-155. Position 213 (Gly-213) interacts with NADPH. 1-deoxy-D-xylulose 5-phosphate contacts are provided by Ser-220, Asn-225, Lys-226, and Glu-229. Residue Glu-229 coordinates Mn(2+).

Belongs to the DXR family. The cofactor is Mg(2+). Mn(2+) is required as a cofactor.

The enzyme catalyses 2-C-methyl-D-erythritol 4-phosphate + NADP(+) = 1-deoxy-D-xylulose 5-phosphate + NADPH + H(+). It functions in the pathway isoprenoid biosynthesis; isopentenyl diphosphate biosynthesis via DXP pathway; isopentenyl diphosphate from 1-deoxy-D-xylulose 5-phosphate: step 1/6. Catalyzes the NADPH-dependent rearrangement and reduction of 1-deoxy-D-xylulose-5-phosphate (DXP) to 2-C-methyl-D-erythritol 4-phosphate (MEP). In Pseudomonas fluorescens (strain SBW25), this protein is 1-deoxy-D-xylulose 5-phosphate reductoisomerase.